Consider the following 31-residue polypeptide: Ice-structuring glycoprotein 3 (31 aa).

10 O-linked (GalNAc...) threonine glycosylation sites follow: Thr-3, Thr-6, Thr-9, Thr-12, Thr-15, Thr-18, Thr-21, Thr-24, Thr-27, and Thr-30.

O-linked glycans consist of Gal-GalNAc disaccharides. The three proteins may differ only in the number of repeating units of -Ala-Ala-Thr-.

The protein resides in the secreted. Functionally, antifreeze proteins lower the blood freezing point. This fish lives in antarctic waters where it experiences water temperatures near -1.9 degrees Celsius. Its blood has a freezing point of about -2.0 degrees Celsius, and 30% of the freezing-point depression is due mainly to the 3 major high molecular weight glycoproteins in the plasma. The protein is Ice-structuring glycoprotein 3 of Pagothenia borchgrevinki (Bald rockcod).